Consider the following 726-residue polypeptide: MNKTVAVRTLDPENLGQGGVQKEEIPSADISDQVPGTESETKILLQGTPVAQMTEDAIDGERLKHLIVTGSGCGEQNMIAMTHTVIAVHYLDHTEQWDKFSLEKRQEALELIKKGYTQQLAFKQPNSAYAAFLNRAPSTWLTAYVVKVFSLAVNLIAIDSQVLCGAVKWLIMEKQKPDGVFQEDAPVIHQEMIGGQRNSVEKERALTAFVLIALQEAREICEEQVNSLAASINKSRDFLAANYMNLQRPYSVAIAAYAWAQQDKLRGAFLNKFLSKAKEKNRWEEPGQRLYNVEASSYALLALLLLRDFDSVPPVVRWLNEQRYYGGGYGSTQATFMGFQALAQYQTDVPDHKDLNMVVSIQLPSRSSPVKHRIVWDSASLLRSEETKENQGFSLTAQGKGQGTLSVVTTYFAKVKGKVTCKKFDLRVNIKTAPETVKKPQDAKSTMILGHCTRYLGDEDATMSILDISMMTGFVPDTDDLNLLSTGVDRYISKYELNKAFSNKNTLIIYLDKISHSREECLAFKVHQYFNVGLIQPGAVKVYSYYNLEETCTQFYHPEKEDGMLSKLCHKEMCRCAEENCFMQQLDEKITLNDRLDKACEPGLDYVYKTKLVQVERADDFDEYLMVVENTIKSGSDEVQAGQPAPFISHIKCRDALKLKDGKHYLMWGLSSDPVGEKPNTSYIIGKDTWVEFWPEKEECQDEENQKHCEDLGAFAESMVVFGCPN.

Positions 1 to 21 (MNKTVAVRTLDPENLGQGGVQ) are disordered. An N-linked (GlcNAc...) asparagine glycan is attached at N2. The residue at position 31 (S31) is a Phosphoserine. The isoglutamyl cysteine thioester (Cys-Gln) cross-link spans 73–76 (CGEQ). N233 carries N-linked (GlcNAc...) asparagine glycosylation. Phosphoserine occurs at positions 384 and 636. 2 cysteine pairs are disulfide-bonded: C581–C653 and C600–C724. An NTR domain is found at 581–724 (CFMQQLDEKI…FAESMVVFGC (144 aa)). N-linked (GlcNAc...) asparagine glycosylation occurs at N680. An interaction with CFP/properdin region spans residues 697–722 (KEECQDEENQKHCEDLGAFAESMVVF).

As to quaternary structure, in absence of complement activation, the C3 precursor is first processed by the removal of 4 Arg residues, forming two chains, beta and alpha, linked by a disulfide bond. In terms of assembly, complement C3b is composed of complement C3b and complement C3 beta chains that are associated via disulfide bonds. Non-enzymatic component of the C5 convertase, also named C4bC2bC3b, composed of the serine protease complement C2b (C2), complement C3b, as well as complement C4b (C4). Non-enzymatic component of the C5 convertase of the alternative complement pathways composed of the serine protease complement CFB and complement C3b. Interacts with CFP; interaction takes place together with CFB in the alternative complement system and allows the complex to become active. Interacts with CR1 (via Sushi 8 and Sushi 9 domains). Interacts with CFH. Post-translationally, C3 precursor is first processed by the removal of 4 Arg residues, forming two chains, beta and alpha, linked by a disulfide bond. During activation of the complement systems, the alpha chain is cleaved into C3a and C3b by the C3 convertase: C3b stays linked to the beta chain, while C3a is released in the plasma. The alpha chain is cleaved by the serine protease complement C2b component of the C3 convertase to generate C3a and C3b following activation by the classical, lectin and GZMK complement systems. The alpha chain is cleaved by CFB component of the C3 convertase to generate C3a and C3b following activation by the alternative complement system. In terms of processing, complement C3b is rapidly split in two positions by factor I (CFI) and a cofactor (CFH) to form iC3b (inactivated C3b) and C3f which is released. CFI and CFH catalyze proteolytic degradation of already-deposited complement C3b. Then iC3b is slowly cleaved (possibly by CFI) to form C3c (beta chain + alpha' chain fragment 1 + alpha' chain fragment 2), C3dg and C3f. Other proteases produce other fragments such as C3d or C3g. Upon activation, the internal thioester bond reacts with carbohydrate antigens on the target surface to form amide or ester bonds, leading to covalent association with the surface of pathogens. Post-translationally, complement C3b interacts with complement C4b via a thioester linkage. In terms of processing, phosphorylated by FAM20C in the extracellular medium.

The protein resides in the secreted. The protein localises to the cell surface. Its activity is regulated as follows. Complement activation is inhibited by VSIG4. Its function is as follows. Precursor of non-enzymatic components of the classical, alternative, lectin and GZMK complement pathways, which consist in a cascade of proteins that leads to phagocytosis and breakdown of pathogens and signaling that strengthens the adaptive immune system. Functionally, non-enzymatic component of C5 convertase. Generated following cleavage by C3 convertase, it covalently attaches to the surface of pathogens, where it acts as an opsonin that marks the surface of antigens for removal. Complement C3b binds covalently via its reactive thioester, to cell surface carbohydrates or immune aggregates. Together with complement C4b, it then recruits the serine protease complement C2b to form the C5 convertase, which cleaves and activate C5, the next component of the complement pathways. In the alternative complement pathway, recruits the serine protease CFB to form the C5 convertase that cleaves and activates C5. This Oryctolagus cuniculus (Rabbit) protein is Complement C3 alpha chain (C3).